The primary structure comprises 112 residues: Protein ORF1 (112 aa).

The span at 1-10 (MEGTDWSGWG) shows a compositional bias: low complexity. Residues 1–20 (MEGTDWSGWGDDSDFPWPKG) are disordered. Residues 51 to 71 (IAFVILIVSLFVLLLGVLLAC) traverse the membrane as a helical segment.

It localises to the host membrane. The chain is Protein ORF1 from Snake adenovirus serotype 1 (SnAdV-1).